The primary structure comprises 367 residues: Fructose-1,6-bisphosphatase class 1 3 (367 aa).

The protein belongs to the FBPase class 1 family. Homotetramer.

It is found in the cytoplasm. It catalyses the reaction beta-D-fructose 1,6-bisphosphate + H2O = beta-D-fructose 6-phosphate + phosphate. It functions in the pathway carbohydrate biosynthesis; gluconeogenesis. This chain is Fructose-1,6-bisphosphatase class 1 3, found in Paraburkholderia phymatum (strain DSM 17167 / CIP 108236 / LMG 21445 / STM815) (Burkholderia phymatum).